We begin with the raw amino-acid sequence, 687 residues long: Glycine--tRNA ligase beta subunit (687 aa).

Belongs to the class-II aminoacyl-tRNA synthetase family. Tetramer of two alpha and two beta subunits.

It localises to the cytoplasm. It carries out the reaction tRNA(Gly) + glycine + ATP = glycyl-tRNA(Gly) + AMP + diphosphate. The chain is Glycine--tRNA ligase beta subunit from Ruegeria sp. (strain TM1040) (Silicibacter sp.).